Reading from the N-terminus, the 227-residue chain is Thymidine kinase (227 aa).

ATP is bound by residues 15–22 (GSMFSGKT) and 87–90 (DEAQ). The Proton acceptor role is filled by Glu88. Positions 144, 147, 176, and 179 each coordinate Zn(2+). A disordered region spans residues 198–227 (RAVATDDADASTNEADPEAADAASADGTAA). Positions 217–227 (ADAASADGTAA) are enriched in low complexity.

It belongs to the thymidine kinase family. Homotetramer.

The protein resides in the cytoplasm. It catalyses the reaction thymidine + ATP = dTMP + ADP + H(+). The chain is Thymidine kinase from Salinibacter ruber (strain DSM 13855 / M31).